The chain runs to 180 residues: Mitochondrial inner membrane protease subunit 2 (180 aa).

The helical transmembrane segment at 19–39 (LVGITLWVPVLMFVEQHVVSV) threads the bilayer. Catalysis depends on residues Ser-46 and Lys-92.

The protein belongs to the peptidase S26 family. IMP2 subfamily. As to quaternary structure, heterodimer of 2 subunits, imp1 and imp2.

Its subcellular location is the mitochondrion inner membrane. Functionally, catalyzes the removal of transit peptides required for the targeting of proteins from the mitochondrial matrix, across the inner membrane, into the inter-membrane space. The sequence is that of Mitochondrial inner membrane protease subunit 2 from Schizosaccharomyces pombe (strain 972 / ATCC 24843) (Fission yeast).